A 391-amino-acid chain; its full sequence is 3-ketoacyl-CoA thiolase (391 aa).

Cys95 (acyl-thioester intermediate) is an active-site residue. Catalysis depends on proton acceptor residues His347 and Cys377.

Belongs to the thiolase-like superfamily. Thiolase family. As to quaternary structure, heterotetramer of two alpha chains (FadB) and two beta chains (FadA).

The protein localises to the cytoplasm. The enzyme catalyses an acyl-CoA + acetyl-CoA = a 3-oxoacyl-CoA + CoA. It functions in the pathway lipid metabolism; fatty acid beta-oxidation. Its function is as follows. Catalyzes the final step of fatty acid oxidation in which acetyl-CoA is released and the CoA ester of a fatty acid two carbons shorter is formed. The chain is 3-ketoacyl-CoA thiolase from Pseudomonas aeruginosa (strain ATCC 15692 / DSM 22644 / CIP 104116 / JCM 14847 / LMG 12228 / 1C / PRS 101 / PAO1).